A 211-amino-acid polypeptide reads, in one-letter code: ATP phosphoribosyltransferase (211 aa).

The protein belongs to the ATP phosphoribosyltransferase family. Short subfamily. In terms of assembly, heteromultimer composed of HisG and HisZ subunits.

The protein localises to the cytoplasm. It catalyses the reaction 1-(5-phospho-beta-D-ribosyl)-ATP + diphosphate = 5-phospho-alpha-D-ribose 1-diphosphate + ATP. It functions in the pathway amino-acid biosynthesis; L-histidine biosynthesis; L-histidine from 5-phospho-alpha-D-ribose 1-diphosphate: step 1/9. Catalyzes the condensation of ATP and 5-phosphoribose 1-diphosphate to form N'-(5'-phosphoribosyl)-ATP (PR-ATP). Has a crucial role in the pathway because the rate of histidine biosynthesis seems to be controlled primarily by regulation of HisG enzymatic activity. This is ATP phosphoribosyltransferase from Pseudomonas putida (strain ATCC 700007 / DSM 6899 / JCM 31910 / BCRC 17059 / LMG 24140 / F1).